Consider the following 686-residue polypeptide: Catalase-2 (686 aa).

Residues 1–27 (MSDDQNKRVNEHSKDEQLEQYRTDNSG) show a composition bias toward basic and acidic residues. The segment at 1 to 43 (MSDDQNKRVNEHSKDEQLEQYRTDNSGKKMTTNQGLRVSEDEH) is disordered. Catalysis depends on residues H78 and N151. A heme-binding site is contributed by Y365.

It belongs to the catalase family. HPII subfamily. Requires heme as cofactor.

The enzyme catalyses 2 H2O2 = O2 + 2 H2O. Decomposes hydrogen peroxide into water and oxygen; serves to protect cells from the toxic effects of hydrogen peroxide. Involved in sporulation. This Bacillus subtilis (strain 168) protein is Catalase-2 (katE).